A 124-amino-acid polypeptide reads, in one-letter code: Autophagy-related protein 8 (124 aa).

A lipid anchor (Phosphatidylethanolamine amidated glycine) is attached at G116. Residues 117–124 (GAGPLLEK) constitute a propeptide, removed in mature form.

The protein belongs to the ATG8 family. In terms of assembly, conjugation to phosphatidylethanolamine (PE) leads to homodimerization. Interacts with ATG1, ATG3, ATG4, ATG7 and ATG12. In terms of processing, the C-terminal 8 residues of ATG8 are removed by ATG4 to expose Gly-116 at the C-terminus. This Gly-116 forms then a thioester bond with the 'Cys-550' of ATG7 (E1-like activating enzyme) before being transferred to the 'Cys-244' of ATG3 (the specific E2 conjugating enzyme), in order to be finally amidated with phosphatidylethanolamine. This lipid modification anchors ATG8 to membranes and can be reversed by ATG4, releasing soluble ATG8.

The protein localises to the cytoplasmic vesicle. Its subcellular location is the cvt vesicle membrane. It localises to the autophagosome membrane. The protein resides in the vacuole membrane. Functionally, ubiquitin-like modifier involved in cytoplasm to vacuole transport (Cvt) vesicles and autophagosome formation. With ATG4, mediates the delivery of the vesicles and autophagosomes to the vacuole via the microtubule cytoskeleton. Required for selective autophagic degradation of the nucleus (nucleophagy) as well as for mitophagy which contributes to regulate mitochondrial quantity and quality by eliminating the mitochondria to a basal level to fulfill cellular energy requirements and preventing excess ROS production. Also participates in membrane fusion events that take place in the early secretory pathway. Also involved in endoplasmic reticulum-specific autophagic process and is essential for the survival of cells subjected to severe ER stress. The ATG8-PE conjugate mediates tethering between adjacent membranes and stimulates membrane hemifusion, leading to expansion of the autophagosomal membrane during autophagy. Moreover not only conjugation, but also subsequent ATG8-PE deconjugation is an important step required to facilitate multiple events during macroautophagy, and especially for efficient autophagosome biogenesis, the assembly of ATG9-containing tubulovesicular clusters into phagophores/autophagosomes, and for the disassembly of PAS-associated ATG components. This Kluyveromyces marxianus (strain DMKU3-1042 / BCC 29191 / NBRC 104275) (Yeast) protein is Autophagy-related protein 8.